The sequence spans 87 residues: U3-theraphotoxin-Hhn1c (87 aa).

The signal sequence occupies residues 1–24; the sequence is MVNMKASMFLTFAGLVLLFVVCHA. Positions 25–52 are excised as a propeptide; that stretch reads SESEEKEFPKEMLSSIFAVDDDFKQEER. Intrachain disulfides connect Cys54–Cys67, Cys61–Cys72, and Cys66–Cys79.

Belongs to the neurotoxin 10 (Hwtx-1) family. 51 (Hntx-8) subfamily. Hntx-8 sub-subfamily. In terms of tissue distribution, expressed by the venom gland.

It localises to the secreted. Its function is as follows. Ion channel inhibitor. The sequence is that of U3-theraphotoxin-Hhn1c from Cyriopagopus hainanus (Chinese bird spider).